A 221-amino-acid polypeptide reads, in one-letter code: Ras-related protein Rab-28 (221 aa).

An N-acetylserine modification is found at Ser-2. Ser-8 is subject to Phosphoserine. Positions 21, 24, 25, 26, 27, 38, 39, 41, and 44 each coordinate GTP. Thr-26 provides a ligand contact to Mg(2+). A switch I region spans residues 35–49; it reads ETFGKQYKQTIGLDF. Thr-44 and Asp-68 together coordinate Mg(2+). The segment at 68-85 is switch II; it reads DIGGQTIGGKMLDKYIYG. Positions 71, 129, 130, 132, 160, and 161 each coordinate GTP. At Cys-218 the chain carries Cysteine methyl ester. A lipid anchor (S-farnesyl cysteine) is attached at Cys-218. Residues 219 to 221 constitute a propeptide, removed in mature form; the sequence is AVQ.

This sequence belongs to the small GTPase superfamily. Rab family. As to quaternary structure, interacts (prenylated form) with PDE6D; the interaction promotes RAB28 delivery to the photoreceptor outer segments. Interacts with KCNJ13; the interaction may facilitate cone outer segments phagocytosis. Interacts with RELA; the interaction contributes to RELA transport from cytoplasm to nucleus. Mg(2+) serves as cofactor. Post-translationally, isoprenylated. As to expression, testis, brain, and to much lower levels heart, skeletal muscle and fat cells. Expressed in the retina.

Its subcellular location is the cell membrane. It is found in the cytoplasm. The protein resides in the cytoskeleton. The protein localises to the cilium basal body. It localises to the nucleus. The enzyme catalyses GTP + H2O = GDP + phosphate + H(+). With respect to regulation, regulated by guanine nucleotide exchange factors (GEFs) which promote the exchange of bound GDP for free GTP. Regulated by GTPase activating proteins (GAPs) which increase the GTP hydrolysis activity. Inhibited by GDP dissociation inhibitors (GDIs). Its function is as follows. The small GTPases Rab are key regulators of intracellular membrane trafficking, from the formation of transport vesicles to their fusion with membranes. Rabs cycle between an inactive GDP-bound form and an active GTP-bound form that is able to recruit to membranes different sets of downstream effectors directly responsible for vesicle formation, movement, tethering and fusion. RAB28 is required for shedding and phagocytosis of cone cell outer segments (OS) discs in the retina. Also participates in nuclear factor kappa-B p65/RELA nuclear transport in endothelial cells. The chain is Ras-related protein Rab-28 from Rattus norvegicus (Rat).